We begin with the raw amino-acid sequence, 107 residues long: QNINWDLRTASVFCATWDADKPLSWRSKYGWTAFCGPVGPTGQDSCGKCLLVTNTGTGAKVTVRIVDQCSNGGLDLDVNVFNQIDTNGQGNAQGHLIVNYDFVDCGD.

The Barwin domain maps to 1 to 107 (QNINWDLRTA…VNYDFVDCGD (107 aa)). Cystine bridges form between cysteine 14-cysteine 46, cysteine 35-cysteine 69, and cysteine 49-cysteine 105.

Preferentially expressed in the tissue surrounding the abscission zone of fruitlets.

It is found in the secreted. The protein resides in the cell wall. Its function is as follows. May be involved in protecting plant tissues from pathogen infection. The chain is Pathogenesis-related protein PR-4 from Prunus persica (Peach).